The following is a 209-amino-acid chain: FMN-dependent NADH:quinone oxidoreductase (209 aa).

FMN is bound by residues S9 and 15–17 (SNS).

The protein belongs to the azoreductase type 1 family. As to quaternary structure, homodimer. FMN is required as a cofactor.

The enzyme catalyses 2 a quinone + NADH + H(+) = 2 a 1,4-benzosemiquinone + NAD(+). It catalyses the reaction N,N-dimethyl-1,4-phenylenediamine + anthranilate + 2 NAD(+) = 2-(4-dimethylaminophenyl)diazenylbenzoate + 2 NADH + 2 H(+). Its function is as follows. Quinone reductase that provides resistance to thiol-specific stress caused by electrophilic quinones. In terms of biological role, also exhibits azoreductase activity. Catalyzes the reductive cleavage of the azo bond in aromatic azo compounds to the corresponding amines. In Bordetella bronchiseptica (strain ATCC BAA-588 / NCTC 13252 / RB50) (Alcaligenes bronchisepticus), this protein is FMN-dependent NADH:quinone oxidoreductase.